Consider the following 606-residue polypeptide: NADH-ubiquinone oxidoreductase chain 5 (606 aa).

The next 15 membrane-spanning stretches (helical) occupy residues Phe4–Leu24, Ala43–Ile63, Met87–Tyr107, Phe117–Leu137, Leu140–Gly160, Ala171–Thr191, Leu213–Leu233, Thr241–Ile261, Phe272–Ala292, Leu310–Cys330, Met366–Leu386, Leu413–Gly433, Leu457–Ile477, Met482–Leu502, and Gly582–Phe602.

In terms of assembly, core subunit of respiratory chain NADH dehydrogenase (Complex I) which is composed of 45 different subunits.

The protein localises to the mitochondrion inner membrane. The catalysed reaction is a ubiquinone + NADH + 5 H(+)(in) = a ubiquinol + NAD(+) + 4 H(+)(out). Functionally, core subunit of the mitochondrial membrane respiratory chain NADH dehydrogenase (Complex I) which catalyzes electron transfer from NADH through the respiratory chain, using ubiquinone as an electron acceptor. Essential for the catalytic activity and assembly of complex I. The chain is NADH-ubiquinone oxidoreductase chain 5 (MT-ND5) from Bos indicus (Zebu).